A 217-amino-acid chain; its full sequence is Phosphate-specific transport system accessory protein PhoU homolog 2 (217 aa).

This sequence belongs to the PhoU family. Homodimer.

The protein localises to the cytoplasm. Functionally, plays a role in the regulation of phosphate uptake. The sequence is that of Phosphate-specific transport system accessory protein PhoU homolog 2 from Methanothermobacter thermautotrophicus (strain ATCC 29096 / DSM 1053 / JCM 10044 / NBRC 100330 / Delta H) (Methanobacterium thermoautotrophicum).